An 855-amino-acid polypeptide reads, in one-letter code: MAGPRGALLAWCRRQCEGYRGVDIRDLSSSFRDGLAFCAILHRHRPDLLDFQSLSKENVFENNRLAFEVAEKELGIPALLDPNDMVSMSVPDCLSIMTYVSQYYNHFTSSGQAAASPPKPGKDPAAPSPTSTSPAVQPGEEAQGDDLSPDSLSEQGKPQPPSSACAACGQRVHLVQRYLAEGRLYHRHCFRCRQCSSTLVPGSYSSGPEEGTFVCAERCTRLGLGGRSGTRPLSLQKQQPAAAAEAKDGEDSDLSKSVVVVAAEADGLQASSEVQPHTLTKPPLPSKPQDLASPPVSRPTPAPRKASESSALTPPTPRPRSSLQQDGMVEQSVSGDLVNGRLQELPVPKPRGTPKLSERMTAPRKDPPWITLVQTEPKKKPAPLPPSSGPGPLSQASRQVENGGLEEKTQKSPAAEPEPKPYNPFEEEEEEEEASVPAVPSPAPAPPETTPKSLHPWYNITPTSSPKTKKRPAPKAPSASPLVLHASRLSHSEPPSATPSPALSVESLSSESSSHTANTEPSEPPAVPKSSSDPAVHVPGTPGTSANSVTPSAHSSLSSSGELGQPSGEQMPQARTRGSPGTHSTKPFSGATPTPFLLAGDQKSPAPPMGSSSPQMLIKSSCKENPFNRKPSPSTSPTVRKATKGAKPVRPPAPGHGFPLIKRKVQADQYIPEEDIYGEMDSIERQLDALEHSGVLLEEKLRGGANEGSEDDMLVDWFKLIHEKHLLVRRESELIYVFKQQNLEQRQADVEFELRCLLNKPEKDWTDDDRAREKVLMQELMTLIEQRDAIVNCLDEDRQREEEEDKMLETMIKKKDFQREAESDSKKKGKFKTMKVLKLLGNKRDAKSKAPTGKS.

Residues 2–108 form the Calponin-homology (CH) domain; it reads AGPRGALLAW…YVSQYYNHFT (107 aa). Disordered regions lie at residues 110–165, 226–253, and 269–659; these read SGQA…SSAC, GRSG…EDSD, and QASS…HGFP. Over residues 124–135 the composition is skewed to low complexity; it reads PAAPSPTSTSPA. The LIM zinc-binding domain occupies 163–226; sequence SACAACGQRV…ERCTRLGLGG (64 aa). A compositionally biased stretch (polar residues) spans 269-278; it reads QASSEVQPHT. 2 positions are modified to phosphoserine: Ser293 and Ser307. Residues 308 to 325 show a composition bias toward polar residues; it reads ESSALTPPTPRPRSSLQQ. Residues Thr313 and Thr316 each carry the phosphothreonine modification. Positions 356–367 are enriched in basic and acidic residues; it reads LSERMTAPRKDP. The NPF1 signature appears at 423-425; it reads NPF. Residues 425-434 show a composition bias toward acidic residues; it reads FEEEEEEEEA. The span at 439 to 449 shows a compositional bias: pro residues; that stretch reads VPSPAPAPPET. Phosphothreonine occurs at positions 461 and 463. Residues Ser464, Ser465, Ser478, and Ser480 each carry the phosphoserine modification. A compositionally biased stretch (low complexity) spans 499 to 514; that stretch reads PSPALSVESLSSESSS. A compositionally biased stretch (polar residues) spans 542-554; the sequence is PGTSANSVTPSAH. Residues 555 to 570 show a composition bias toward low complexity; it reads SSLSSSGELGQPSGEQ. A Phosphoserine modification is found at Ser613. The short motif at 625–627 is the NPF2 element; sequence NPF. A mediates the interaction with RAB13 and intramolecular interaction with the calponin-homology (CH) domain region spans residues 644–855; sequence KGAKPVRPPA…AKSKAPTGKS (212 aa). In terms of domain architecture, bMERB spans 663 to 810; the sequence is RKVQADQYIP…EEEEDKMLET (148 aa). The stretch at 679 to 703 forms a coiled coil; sequence EMDSIERQLDALEHSGVLLEEKLRG. Phosphoserine is present on residues Ser682 and Ser732. The tract at residues 692–855 is necessary and sufficient to associate with tubular recycling endosome membranes, mediate phosphatidic acid-binding and membrane tubulation; that stretch reads HSGVLLEEKL…AKSKAPTGKS (164 aa). The stretch at 794 to 822 forms a coiled coil; it reads LDEDRQREEEEDKMLETMIKKKDFQREAE. A compositionally biased stretch (basic and acidic residues) spans 815-826; the sequence is KDFQREAESDSK. The interval 815–855 is disordered; it reads KDFQREAESDSKKKGKFKTMKVLKLLGNKRDAKSKAPTGKS.

In terms of assembly, homooligomer. Interacts (via NPF1 motif) with EHD1 (via EH domain); the interaction is direct and probably recruits EHD1 to membranes. Interacts with EHD3 (via EH domain). Interacts with RAB35 (GTP-bound form); the interaction is direct and probably recruits MICALL1 to membranes. Interacts with ACAP2; the interaction is indirect through RAB35. Interacts with RAB8A (GTP-bound form); regulates RAB8A association with recycling endosomes. Interacts with RAB13 (GTP-bound form). Interacts with ARF6 (GTP-bound form). Interacts with PACSIN2 (via the SH3 domain). Interacts with DPYSL2.

It is found in the recycling endosome membrane. The protein resides in the late endosome membrane. Its subcellular location is the cell projection. It localises to the cilium membrane. The protein localises to the cytoplasm. It is found in the cytoskeleton. The protein resides in the microtubule organizing center. Its subcellular location is the centrosome. It localises to the centriole. Its function is as follows. Lipid-binding protein with higher affinity for phosphatidic acid, a lipid enriched in recycling endosome membranes. On endosome membranes, acts as a downstream effector of Rab proteins recruiting cytosolic proteins to regulate membrane tubulation. Involved in a late step of receptor-mediated endocytosis regulating for instance endocytosed-EGF receptor trafficking. Alternatively, regulates slow endocytic recycling of endocytosed proteins back to the plasma membrane. Also involved in cargo protein delivery to the plasma membrane. Plays a role in ciliogenesis coordination, recruits EHD1 to primary cilium where it is anchored to the centriole through interaction with tubulins. May indirectly play a role in neurite outgrowth. In Rattus norvegicus (Rat), this protein is MICAL-like protein 1 (Micall1).